Reading from the N-terminus, the 365-residue chain is Aminomethyltransferase (365 aa).

It belongs to the GcvT family. As to quaternary structure, the glycine cleavage system is composed of four proteins: P, T, L and H.

It carries out the reaction N(6)-[(R)-S(8)-aminomethyldihydrolipoyl]-L-lysyl-[protein] + (6S)-5,6,7,8-tetrahydrofolate = N(6)-[(R)-dihydrolipoyl]-L-lysyl-[protein] + (6R)-5,10-methylene-5,6,7,8-tetrahydrofolate + NH4(+). Its function is as follows. The glycine cleavage system catalyzes the degradation of glycine. This is Aminomethyltransferase from Bacillus pumilus (strain SAFR-032).